A 100-amino-acid polypeptide reads, in one-letter code: Small ribosomal subunit protein uS14m (100 aa).

The protein belongs to the universal ribosomal protein uS14 family.

The protein resides in the mitochondrion. This is Small ribosomal subunit protein uS14m (RPS14) from Vicia faba (Broad bean).